Here is a 218-residue protein sequence, read N- to C-terminus: Probable septum site-determining protein MinC (218 aa).

This sequence belongs to the MinC family. In terms of assembly, interacts with MinD and FtsZ.

Cell division inhibitor that blocks the formation of polar Z ring septums. Rapidly oscillates between the poles of the cell to destabilize FtsZ filaments that have formed before they mature into polar Z rings. Prevents FtsZ polymerization. The sequence is that of Probable septum site-determining protein MinC from Moorella thermoacetica (strain ATCC 39073 / JCM 9320).